The chain runs to 404 residues: Putative aspartate aminotransferase, cytoplasmic 2 (404 aa).

Residue lysine 249 is modified to N6-(pyridoxal phosphate)lysine.

This sequence belongs to the class-I pyridoxal-phosphate-dependent aminotransferase family. In terms of assembly, homodimer. Requires pyridoxal 5'-phosphate as cofactor.

Its subcellular location is the cytoplasm. It catalyses the reaction L-aspartate + 2-oxoglutarate = oxaloacetate + L-glutamate. The polypeptide is Putative aspartate aminotransferase, cytoplasmic 2 (Got1l1) (Mus musculus (Mouse)).